The chain runs to 144 residues: Maximins 3/H14 (144 aa).

An N-terminal signal peptide occupies residues 1 to 18 (MNFKYIVAVSFLIASAYA). 2 consecutive propeptides follow at residues 19–43 (RSVQ…REIR) and 73–122 (RTAE…KKEK). An Isoleucine amide modification is found at Ile-143.

This sequence belongs to the bombinin family. As to expression, expressed by the skin glands.

Its subcellular location is the secreted. Maximin-3 shows antibacterial activity against both Gram-positive and Gram-negative bacteria. It also shows antimicrobial activity against the fungus C.albicans, but not against A.flavus nor P.uticale. It has little hemolytic activity. It possess a significant cytotoxicity against tumor cell lines. It possess a significant anti-HIV activity. It shows high spermicidal activity. In terms of biological role, maximin-H14 shows antimicrobial activity against bacteria and against the fungus C.albicans. Shows strong hemolytic activity. In Bombina maxima (Giant fire-bellied toad), this protein is Maximins 3/H14.